A 128-amino-acid polypeptide reads, in one-letter code: MLYQILALLIWSSSLIVGKLTYSMMDPVLVVQVRLIIAMIIVMPLFLRRWKKIDKPMRKQLWWLAFFNYTAVFLLQFIGLKYTSASSAVTMIGLEPLLVVFVGHFFFKTKQNGFTGYSVQWHLLAWQF.

The next 4 helical transmembrane spans lie at 5–25 (ILAL…YSMM), 27–47 (PVLV…PLFL), 60–80 (QLWW…FIGL), and 87–107 (SAVT…HFFF). The EamA domain occupies 9–110 (LIWSSSLIVG…FVGHFFFKTK (102 aa)).

It is found in the cell membrane. This is an uncharacterized protein from Haemophilus influenzae (strain ATCC 51907 / DSM 11121 / KW20 / Rd).